The chain runs to 284 residues: L-ribulose-5-phosphate 3-epimerase UlaE (284 aa).

This sequence belongs to the L-ribulose-5-phosphate 3-epimerase family.

It carries out the reaction L-ribulose 5-phosphate = L-xylulose 5-phosphate. It functions in the pathway cofactor degradation; L-ascorbate degradation; D-xylulose 5-phosphate from L-ascorbate: step 3/4. Its function is as follows. Catalyzes the isomerization of L-xylulose-5-phosphate to L-ribulose-5-phosphate. Is involved in the anaerobic L-ascorbate utilization. This is L-ribulose-5-phosphate 3-epimerase UlaE from Escherichia coli O127:H6 (strain E2348/69 / EPEC).